The sequence spans 738 residues: Catalase-peroxidase (738 aa).

An N-terminal signal peptide occupies residues 1–24 (MEPLFPKRLLSIAVLCVASATAQA). A cross-link (tryptophyl-tyrosyl-methioninium (Trp-Tyr) (with M-252)) is located at residues 104–226 (WHAAGTYRMI…FGATEMGLIY (123 aa)). His-105 serves as the catalytic Proton acceptor. Residues 191–213 (EEVNWGPEGQWLTDRRHSGDRKL) form a disordered region. Over residues 203–213 (TDRRHSGDRKL) the composition is skewed to basic and acidic residues. The segment at residues 226–252 (YVNPEGPHGNPDPIAAAHDIRQAFGRM) is a cross-link (tryptophyl-tyrosyl-methioninium (Tyr-Met) (with W-104)). Residue His-267 participates in heme b binding.

It belongs to the peroxidase family. Peroxidase/catalase subfamily. In terms of assembly, homodimer or homotetramer. Requires heme b as cofactor. Post-translationally, formation of the three residue Trp-Tyr-Met cross-link is important for the catalase, but not the peroxidase activity of the enzyme.

It carries out the reaction H2O2 + AH2 = A + 2 H2O. The catalysed reaction is 2 H2O2 = O2 + 2 H2O. In terms of biological role, bifunctional enzyme with both catalase and broad-spectrum peroxidase activity. The protein is Catalase-peroxidase of Saccharophagus degradans (strain 2-40 / ATCC 43961 / DSM 17024).